The sequence spans 395 residues: Peptide-N(4)-(N-acetyl-beta-glucosaminyl)asparagine amidase (395 aa).

Cys-131, Cys-134, Cys-172, and Cys-175 together coordinate Zn(2+). The Nucleophile role is filled by Cys-198. Active-site residues include His-232 and Asp-249. Residue Glu-252 coordinates substrate. Residues 363–395 form a disordered region; it reads PELTKTTPSTDLPSGRQSGSTEWTKSRGENGES. The span at 366-385 shows a compositional bias: polar residues; the sequence is TKTTPSTDLPSGRQSGSTEW. Over residues 386-395 the composition is skewed to basic and acidic residues; it reads TKSRGENGES.

This sequence belongs to the transglutaminase-like superfamily. PNGase family. The cofactor is Zn(2+).

It is found in the cytoplasm. It carries out the reaction Hydrolysis of an N(4)-(acetyl-beta-D-glucosaminyl)asparagine residue in which the glucosamine residue may be further glycosylated, to yield a (substituted) N-acetyl-beta-D-glucosaminylamine and a peptide containing an aspartate residue.. Its function is as follows. Specifically deglycosylates the denatured form of N-linked glycoproteins in the cytoplasm and assists their proteasome-mediated degradation. Cleaves the beta-aspartyl-glucosamine (GlcNAc) of the glycan and the amide side chain of Asn, converting Asn to Asp. Prefers proteins containing high-mannose over those bearing complex type oligosaccharides. Can recognize misfolded proteins in the endoplasmic reticulum that are exported to the cytosol to be destroyed and deglycosylate them, while it has no activity toward native proteins. Deglycosylation is a prerequisite for subsequent proteasome-mediated degradation of some, but not all, misfolded glycoproteins. This Candida albicans (strain SC5314 / ATCC MYA-2876) (Yeast) protein is Peptide-N(4)-(N-acetyl-beta-glucosaminyl)asparagine amidase (PNG1).